Consider the following 270-residue polypeptide: Checkpoint signal transducer rad25 (270 aa).

A phosphoserine mark is found at Ser-234 and Ser-253. The interval 240–270 (QSAKEEAPAAAAASENEHPEPKESTTDTVKA) is disordered. Basic and acidic residues predominate over residues 254 to 270 (ENEHPEPKESTTDTVKA).

This sequence belongs to the 14-3-3 family. As to quaternary structure, interacts with rad24. Interacts with byr2.

It is found in the cytoplasm. Functionally, acts in cell cycle and stress checkpoint signaling by sequestering signal transducers regulated by the checkpoints. Required for the DNA damage checkpoint that ensures that DNA damage is repaired before mitosis is attempted. Sequesters byr2 in the cytoplasm to prevent its translocation to the plasma membrane. This Schizosaccharomyces pombe (strain 972 / ATCC 24843) (Fission yeast) protein is Checkpoint signal transducer rad25.